The sequence spans 155 residues: Small ribosomal subunit protein uS7c (155 aa).

Belongs to the universal ribosomal protein uS7 family. As to quaternary structure, part of the 30S ribosomal subunit.

It localises to the plastid. One of the primary rRNA binding proteins, it binds directly to 16S rRNA where it nucleates assembly of the head domain of the 30S subunit. In Lathraea clandestina (Purple toothwort), this protein is Small ribosomal subunit protein uS7c (rps7).